Reading from the N-terminus, the 66-residue chain is Large ribosomal subunit protein bL35 (66 aa).

Belongs to the bacterial ribosomal protein bL35 family.

The polypeptide is Large ribosomal subunit protein bL35 (Caulobacter sp. (strain K31)).